A 264-amino-acid polypeptide reads, in one-letter code: 3-methyl-2-oxobutanoate hydroxymethyltransferase (264 aa).

Mg(2+)-binding residues include aspartate 45 and aspartate 84. 3-methyl-2-oxobutanoate is bound by residues 45 to 46, aspartate 84, and lysine 112; that span reads DS. Glutamate 114 contributes to the Mg(2+) binding site. Catalysis depends on glutamate 181, which acts as the Proton acceptor.

It belongs to the PanB family. Homodecamer; pentamer of dimers. Mg(2+) is required as a cofactor.

It is found in the cytoplasm. It catalyses the reaction 3-methyl-2-oxobutanoate + (6R)-5,10-methylene-5,6,7,8-tetrahydrofolate + H2O = 2-dehydropantoate + (6S)-5,6,7,8-tetrahydrofolate. It functions in the pathway cofactor biosynthesis; (R)-pantothenate biosynthesis; (R)-pantoate from 3-methyl-2-oxobutanoate: step 1/2. In terms of biological role, catalyzes the reversible reaction in which hydroxymethyl group from 5,10-methylenetetrahydrofolate is transferred onto alpha-ketoisovalerate to form ketopantoate. This chain is 3-methyl-2-oxobutanoate hydroxymethyltransferase, found in Pectobacterium atrosepticum (strain SCRI 1043 / ATCC BAA-672) (Erwinia carotovora subsp. atroseptica).